The following is a 471-amino-acid chain: Tryptophanase (471 aa).

Residues K5, K115, and K156 each carry the N6-acetyllysine modification. At K270 the chain carries N6-(pyridoxal phosphate)lysine. Position 450 is an N6-acetyllysine (K450).

This sequence belongs to the beta-eliminating lyase family. In terms of assembly, homotetramer. It depends on pyridoxal 5'-phosphate as a cofactor.

It carries out the reaction L-tryptophan + H2O = indole + pyruvate + NH4(+). It participates in amino-acid degradation; L-tryptophan degradation via pyruvate pathway; indole and pyruvate from L-tryptophan: step 1/1. The sequence is that of Tryptophanase from Escherichia coli O9:H4 (strain HS).